Reading from the N-terminus, the 244-residue chain is MSKLDLNALNELPKVDRILALAETNAELEKLDAEGRVAWALDNLPGEYVLSSSFGIQAAVSLHLVNQIHPDIPVILTDTGYLFPETYRFIDELTDKLKLNLKVYRATESAAWQEARYGKLWEQGVEGIEKYNDINKVEPMNRALKELNAQTWFAGLRREQSGSRANLPVLAIQRGVFKVLPIIDWDNRTIYQYLQKHGLKYHPLWDEGYLSVGDTHTTRKWEPGMSEEETRFFGLKRECGLHEG.

The active-site Nucleophile; cysteine thiosulfonate intermediate is cysteine 239.

It belongs to the PAPS reductase family. CysH subfamily.

It localises to the cytoplasm. It catalyses the reaction [thioredoxin]-disulfide + sulfite + adenosine 3',5'-bisphosphate + 2 H(+) = [thioredoxin]-dithiol + 3'-phosphoadenylyl sulfate. It functions in the pathway sulfur metabolism; hydrogen sulfide biosynthesis; sulfite from sulfate: step 3/3. Functionally, catalyzes the formation of sulfite from phosphoadenosine 5'-phosphosulfate (PAPS) using thioredoxin as an electron donor. In Escherichia coli O8 (strain IAI1), this protein is Phosphoadenosine 5'-phosphosulfate reductase.